We begin with the raw amino-acid sequence, 360 residues long: Phospho-N-acetylmuramoyl-pentapeptide-transferase (360 aa).

A run of 10 helical transmembrane segments spans residues 2 to 22 (IAILVSGAVGLLVSLFGTPLF), 52 to 72 (MGGVVIIAATVLGYTVANISA), 80 to 100 (GLLLLFLMIGLGVIGFLDDFI), 114 to 134 (WKIIGQGVIGVTFSVLALQFP), 156 to 176 (LAFAGAAVGLVLFVIWANFLI), 189 to 209 (LDGLATGVSVFVFSAYVVVTM), 235 to 255 (LAIVTAAIVGACAGFLWWNAS), 259 to 279 (IFMGDTGALALGGALAGLSIL), 284 to 304 (FLAVIIGGLFVVIVLSDVIQI), and 338 to 358 (FWLIAALFVALGVGIFYAEWV).

It belongs to the glycosyltransferase 4 family. MraY subfamily. Requires Mg(2+) as cofactor.

The protein resides in the cell membrane. It catalyses the reaction UDP-N-acetyl-alpha-D-muramoyl-L-alanyl-gamma-D-glutamyl-meso-2,6-diaminopimeloyl-D-alanyl-D-alanine + di-trans,octa-cis-undecaprenyl phosphate = di-trans,octa-cis-undecaprenyl diphospho-N-acetyl-alpha-D-muramoyl-L-alanyl-D-glutamyl-meso-2,6-diaminopimeloyl-D-alanyl-D-alanine + UMP. The protein operates within cell wall biogenesis; peptidoglycan biosynthesis. Catalyzes the initial step of the lipid cycle reactions in the biosynthesis of the cell wall peptidoglycan: transfers peptidoglycan precursor phospho-MurNAc-pentapeptide from UDP-MurNAc-pentapeptide onto the lipid carrier undecaprenyl phosphate, yielding undecaprenyl-pyrophosphoryl-MurNAc-pentapeptide, known as lipid I. The protein is Phospho-N-acetylmuramoyl-pentapeptide-transferase of Beutenbergia cavernae (strain ATCC BAA-8 / DSM 12333 / CCUG 43141 / JCM 11478 / NBRC 16432 / NCIMB 13614 / HKI 0122).